Here is a 214-residue protein sequence, read N- to C-terminus: A-type ATP synthase subunit D (214 aa).

Belongs to the V-ATPase D subunit family. In terms of assembly, has multiple subunits with at least A(3), B(3), C, D, E, F, H, I and proteolipid K(x).

The protein localises to the cell membrane. Its function is as follows. Component of the A-type ATP synthase that produces ATP from ADP in the presence of a proton gradient across the membrane. The protein is A-type ATP synthase subunit D of Pyrococcus furiosus (strain ATCC 43587 / DSM 3638 / JCM 8422 / Vc1).